The primary structure comprises 1507 residues: Paired amphipathic helix protein sin-3 (1507 aa).

5 disordered regions span residues 1–26 (MYNPPPGGGGGNNGGDQSQQQPTNNA), 228–286 (PLAL…PPRV), 397–450 (ELGS…MMEE), 543–569 (VDDVPGPSNAPQEIKKPDDIEKKDSSK), and 1349–1434 (IPRE…MDHL). Residues 16 to 26 (DQSQQQPTNNA) show a composition bias toward polar residues. Residues 270 to 279 (RQNRPGRRKK) show a composition bias toward basic residues. In terms of domain architecture, PAH spans 282 to 352 (GPPRVDEALA…LGFNTFLPTG (71 aa)). Positions 427 to 438 (DGIDDEDDEESG) are enriched in acidic residues. Basic and acidic residues-rich tracts occupy residues 439-450 (IEDKNNEEMMEE) and 555-568 (EIKKPDDIEKKDSS). Acidic residues-rich tracts occupy residues 1354-1365 (KDDDDDDDEEGN), 1373-1382 (NVKDEDDGGD), and 1389-1421 (PDDDQPPPSNDDGDDEEDEDDEEDGPSGADEPE).

As to quaternary structure, component of the SIN3S complex, which contains at least sin-3, hda-1, athp-1 and mrg-1. Interacts with ztf-11; the interaction is weak. Interacts with cfp-1. Expressed in all ray structural cells including ray 6, 7, 8 and 9 of the male tail. Also expressed in the inner labial neurons, socket cells, the cephalic neurons in the head and the ventral nerve cord.

It is found in the nucleus. Functionally, probable transcriptional repressor required for the deposition of dimethylated 'Lys-9' of histone H3 (H3K9me2) on asynapsed chromosome pairs (both autosomes and sex chromosomes) during meiosis, but this does not seem to solely affect the transcriptional status. Plays a role in ray fusion and patterning in the male tail, and this may be through activity of the histone deacetylase complex (HDAC). This is Paired amphipathic helix protein sin-3 from Caenorhabditis elegans.